The primary structure comprises 444 residues: Nuclear distribution protein nudF (444 aa).

The region spanning 9–41 (QAEALHKAMLAYLSVINAPQTAETLREELHFDE) is the LisH domain. Residues 60–88 (TGIARLQRRINDLEAEVRSLQAELEASPS) are a coiled coil. The segment at 83-107 (LEASPSAARAKNQDPTNWLPKPSST) is disordered. WD repeat units follow at residues 112–153 (SHRD…RTLK), 155–195 (HIRG…ANIR), 199–239 (GHDH…CVKV), 243–282 (ATES…PKAA), 285–345 (GHEN…IKTL), 347–386 (GHDN…RLVK), and 391–437 (AHEH…GCAD).

Belongs to the WD repeat LIS1/nudF family. As to quaternary structure, interacts with dynein. Self-associates. Interacts with bnfA, nudC and nudE.

Its subcellular location is the cytoplasm. It is found in the cytoskeleton. It localises to the spindle pole. Positively regulates the activity of the minus-end directed microtubule motor protein dynein. May enhance dynein-mediated microtubule sliding by targeting dynein to the microtubule plus end. Required for nuclear migration during vegetative growth as well as development. Required for retrograde early endosome (EE) transport from the hyphal tip. Required for localization of dynein to the mitotic spindle poles. Recruits additional proteins to the dynein complex at SPBs. The polypeptide is Nuclear distribution protein nudF (Emericella nidulans (strain FGSC A4 / ATCC 38163 / CBS 112.46 / NRRL 194 / M139) (Aspergillus nidulans)).